We begin with the raw amino-acid sequence, 408 residues long: MQAVTAAAAAGQLLTDTRRGPRCRARLGTTRLSWTGRFAVEAFAGQCQSSATTVMHKFSAISQAARPRRNTKRQCSDDYPALQAGCSEVNWDQNGSNANRLEEIRGDVLKKLRSFYEFCRPHTIFGTIIGITSVSLLPMKSIDDFTVTVLRGYLEALTAALCMNIYVVGLNQLYDIQIDKINKPGLPLASGEFSVATGVFLVLAFLIMSFSIGIRSGSAPLMCALIVSFLLGSAYSIEAPFLRWKRHALLAASCILFVRAILVQLAFFAHMQQHVLKRPLAATKSLVFATLFMCCFSAVIALFKDIPDVDGDRDFGIQSLSVRLGPQRVYQLCISILLTAYGAATLVGASSTNLFQKIITVSGHGLLALTLWQRAQHFEVENQARVTSFYMFIWKLFYAEYFLIPFVQ.

Residues 1–62 (MQAVTAAAAA…TVMHKFSAIS (62 aa)) constitute a chloroplast transit peptide. 9 consecutive transmembrane segments (helical) span residues 122-142 (HTIFGTIIGITSVSLLPMKSI), 156-176 (ALTAALCMNIYVVGLNQLYDI), 194-214 (SVATGVFLVLAFLIMSFSIGI), 221-241 (LMCALIVSFLLGSAYSIEAPF), 248-268 (ALLAASCILFVRAILVQLAFF), 286-306 (LVFATLFMCCFSAVIALFKDI), 329-349 (VYQLCISILLTAYGAATLVGA), 352-372 (TNLFQKIITVSGHGLLALTLW), and 386-406 (VTSFYMFIWKLFYAEYFLIPF).

This sequence belongs to the UbiA prenyltransferase family. Expressed in seeds.

It localises to the plastid. The protein localises to the chloroplast membrane. It carries out the reaction homogentisate + (2E,6E,10E)-geranylgeranyl diphosphate + H(+) = 6-geranylgeranyl-2-methylbenzene-1,4-diol + CO2 + diphosphate. Its pathway is cofactor biosynthesis; tocopherol biosynthesis. Its function is as follows. Involved in the synthesis of tocotrienol (vitamin E). Catalyzes the condensation of homogentisate and geranylgeranyl diphosphate to form 2-methyl-6-geranylgeranylbenzoquinol. Possesses low activity with phytyl diphosphate as substrate. This is Homogentisate geranylgeranyltransferase from Hordeum vulgare (Barley).